A 135-amino-acid chain; its full sequence is Large ribosomal subunit protein uL16c (135 aa).

Belongs to the universal ribosomal protein uL16 family. Part of the 50S ribosomal subunit.

The protein resides in the plastid. It localises to the chloroplast. In Oenothera argillicola (Appalachian evening primrose), this protein is Large ribosomal subunit protein uL16c.